The primary structure comprises 427 residues: Type II methyltransferase M1.BsuMI (427 aa).

The region spanning 84-427 is the SAM-dependent MTase C5-type domain; the sequence is INIADLFSGC…SYLLALHQLR (344 aa). C176 is a catalytic residue.

Belongs to the class I-like SAM-binding methyltransferase superfamily. C5-methyltransferase family. Monomer. May form a complex with YdiP, also seems to be active alone.

It carries out the reaction a 2'-deoxycytidine in DNA + S-adenosyl-L-methionine = a 5-methyl-2'-deoxycytidine in DNA + S-adenosyl-L-homocysteine + H(+). Its activity is regulated as follows. Somewhat inhibited by MgCl(2) and spermidine, strongly inhibited by MnCl(2). Its function is as follows. A methylase, recognizes the double-stranded sequence 5'-YTCGAR-3', methylates C-3 on both strands, and protects the DNA from cleavage by the BsuMI endonuclease. In Bacillus subtilis (strain 168), this protein is Type II methyltransferase M1.BsuMI (ydiO).